A 338-amino-acid polypeptide reads, in one-letter code: UDP-3-O-acylglucosamine N-acyltransferase (338 aa).

The active-site Proton acceptor is the H251.

Belongs to the transferase hexapeptide repeat family. LpxD subfamily. As to quaternary structure, homotrimer.

The catalysed reaction is a UDP-3-O-[(3R)-3-hydroxyacyl]-alpha-D-glucosamine + a (3R)-hydroxyacyl-[ACP] = a UDP-2-N,3-O-bis[(3R)-3-hydroxyacyl]-alpha-D-glucosamine + holo-[ACP] + H(+). It participates in bacterial outer membrane biogenesis; LPS lipid A biosynthesis. Its function is as follows. Catalyzes the N-acylation of UDP-3-O-acylglucosamine using 3-hydroxyacyl-ACP as the acyl donor. Is involved in the biosynthesis of lipid A, a phosphorylated glycolipid that anchors the lipopolysaccharide to the outer membrane of the cell. This is UDP-3-O-acylglucosamine N-acyltransferase from Psychrobacter arcticus (strain DSM 17307 / VKM B-2377 / 273-4).